The sequence spans 319 residues: Acetyl-coenzyme A carboxylase carboxyl transferase subunit alpha (319 aa).

The 262-residue stretch at 35–296 folds into the CoA carboxyltransferase C-terminal domain; the sequence is DLDKEIEQLE…KATLLRQLAE (262 aa).

The protein belongs to the AccA family. Acetyl-CoA carboxylase is a heterohexamer composed of biotin carboxyl carrier protein (AccB), biotin carboxylase (AccC) and two subunits each of ACCase subunit alpha (AccA) and ACCase subunit beta (AccD).

The protein localises to the cytoplasm. The enzyme catalyses N(6)-carboxybiotinyl-L-lysyl-[protein] + acetyl-CoA = N(6)-biotinyl-L-lysyl-[protein] + malonyl-CoA. It participates in lipid metabolism; malonyl-CoA biosynthesis; malonyl-CoA from acetyl-CoA: step 1/1. In terms of biological role, component of the acetyl coenzyme A carboxylase (ACC) complex. First, biotin carboxylase catalyzes the carboxylation of biotin on its carrier protein (BCCP) and then the CO(2) group is transferred by the carboxyltransferase to acetyl-CoA to form malonyl-CoA. The polypeptide is Acetyl-coenzyme A carboxylase carboxyl transferase subunit alpha (Vibrio vulnificus (strain CMCP6)).